The following is a 245-amino-acid chain: Thiopurine S-methyltransferase (245 aa).

S-adenosyl-L-methionine is bound at residue 29–40 (WREKWVDGKIGF). F40 contributes to the substrate binding site. An N6-acetyllysine modification is found at K58. S-adenosyl-L-methionine is bound by residues L69, E90, and R152.

The protein belongs to the class I-like SAM-binding methyltransferase superfamily. TPMT family. Monomer.

It localises to the cytoplasm. The catalysed reaction is S-adenosyl-L-methionine + a thiopurine = S-adenosyl-L-homocysteine + a thiopurine S-methylether.. In Felis catus (Cat), this protein is Thiopurine S-methyltransferase (TPMT).